The following is a 76-amino-acid chain: uncharacterized protein (76 aa).

The first 22 residues, 1-22, serve as a signal peptide directing secretion; the sequence is MFTKALSVVLLTCALFSGQLMA.

This is an uncharacterized protein from Escherichia coli O157:H7.